The primary structure comprises 671 residues: tRNA(Met) cytidine acetyltransferase TmcA (671 aa).

Residues glutamine 180, 202–211 (GRGKSALAGQ), and arginine 319 each bind ATP. The N-acetyltransferase domain occupies 356–531 (QTLWRSEPET…SGCYTAMALL (176 aa)). Acetyl-CoA contacts are provided by residues 461 to 463 (IAV), 468 to 474 (QREGTGR), glutamate 499, and arginine 506.

It belongs to the RNA cytidine acetyltransferase family. TmcA subfamily.

It is found in the cytoplasm. The catalysed reaction is cytidine(34) in elongator tRNA(Met) + acetyl-CoA + ATP + H2O = N(4)-acetylcytidine(34) in elongator tRNA(Met) + ADP + phosphate + CoA + H(+). In terms of biological role, catalyzes the formation of N(4)-acetylcytidine (ac(4)C) at the wobble position of tRNA(Met), by using acetyl-CoA as an acetyl donor and ATP (or GTP). The chain is tRNA(Met) cytidine acetyltransferase TmcA from Shigella flexneri serotype 5b (strain 8401).